A 345-amino-acid polypeptide reads, in one-letter code: MSDVALKRNSSFFRAKARLTLLKRRDGGVISRSLEHRRSSRRRSSVSAPTRRVSGTLAKLGADDRRQFFDAFFRMTAVSPEETVSLLRSMTVPVIQQENISLPYDINAKFAPGDCISLSEMGYTLEMGGCCSLCSYGWSTTTPPELPALELAFMHHLSSVVEFKELVTSLRVCAGNSIVGNGAYENEGLLRMIKHLLEQSTLFYAYYTVKGGVSHDFRVLISEDGGGDGGSPAYAMYFVFKPGSPLHLGAKLIRQLIFNCPGYKWHADVHEGAFLLVVTRDRCSAIPEPRRVKLDPEDVYRRYCDVLVTEEKVHDYSRLYSTFSTYCPPASRREQTAAPATAKQV.

A CCCH-type zinc finger spans residues 115 to 247; it reads CISLSEMGYT…FVFKPGSPLH (133 aa).

This sequence belongs to the herpesviridae NEC1 protein family. As to quaternary structure, forms a heterohexameric complex with NEC2. Interacts with capsid vertex specific component 2/CVC2; this interaction directs the capsid to the host inner nuclear membrane to initiate budding. Post-translationally, phosphorylated at serine residues in the N-terminus. This phosphorylation regulates the localization within the inner nuclear membrane.

The protein resides in the host nucleus inner membrane. In terms of biological role, plays an essential role in virion nuclear egress, the first step of virion release from infected cell. Within the host nucleus, NEC1 interacts with the newly formed capsid through the vertexes and directs it to the inner nuclear membrane by associating with NEC2. Induces the budding of the capsid at the inner nuclear membrane as well as its envelopment into the perinuclear space. There, the NEC1/NEC2 complex promotes the fusion of the enveloped capsid with the outer nuclear membrane and the subsequent release of the viral capsid into the cytoplasm where it will reach the secondary budding sites in the host Golgi or trans-Golgi network. The sequence is that of Nuclear egress protein 1 from Psittacid herpesvirus 1 (isolate Amazon parrot/-/97-0001/1997) (PsHV-1).